Consider the following 250-residue polypeptide: Low affinity immunoglobulin gamma Fc region receptor III-A (250 aa).

The signal sequence occupies residues Met-1–Ala-20. The Extracellular portion of the chain corresponds to Ala-21 to Gln-207. Ig-like C2-type domains lie at Pro-32–His-105 and Glu-120–Thr-189. Cystine bridges form between Cys-47–Cys-89 and Cys-128–Cys-172. N-linked (GlcNAc...) asparagine glycans are attached at residues Asn-63, Asn-133, Asn-180, and Asn-187. Residues Ile-208–Val-228 traverse the membrane as a helical segment. At Gln-229 to Pro-250 the chain is on the cytoplasmic side.

In terms of assembly, forms a heterooligomeric complex with ITAM-containing signaling subunits FCER1G. Interacts (via transmembrane domain) with signaling subunits; this interaction is a prerequisite for receptor complex expression on the cell surface and intracellular signal transduction. Binds the Fc region of antigen-complexed IgG.

The protein resides in the cell membrane. In terms of biological role, receptor for the invariable Fc fragment of immunoglobulin gamma (IgG). Optimally activated upon binding of clustered antigen-IgG complexes displayed on cell surfaces, triggers lysis of antibody-coated cells, a process known as antibody-dependent cellular cytotoxicity (ADCC). Does not bind free monomeric IgG, thus avoiding inappropriate effector cell activation in the absence of antigenic trigger. Mediates IgG effector functions on natural killer (NK) cells. Binds antigen-IgG complexes generated upon infection and triggers NK cell-dependent cytokine production and degranulation to limit viral load and propagation. Fc-binding subunit that associates with FCER1G adapter to form functional signaling complexes. Following the engagement of antigen-IgG complexes, triggers phosphorylation of immunoreceptor tyrosine-based activation motif (ITAM)-containing adapter with subsequent activation of phosphatidylinositol 3-kinase signaling and sustained elevation of intracellular calcium that ultimately drive NK cell activation. Mediates enhanced ADCC in response to afucosylated IgGs. The chain is Low affinity immunoglobulin gamma Fc region receptor III-A from Felis catus (Cat).